We begin with the raw amino-acid sequence, 81 residues long: Sulfur carrier protein TusA (81 aa).

The Cysteine persulfide intermediate role is filled by cysteine 19.

It belongs to the sulfur carrier protein TusA family.

It is found in the cytoplasm. In terms of biological role, sulfur carrier protein which probably makes part of a sulfur-relay system. The polypeptide is Sulfur carrier protein TusA (Shewanella oneidensis (strain ATCC 700550 / JCM 31522 / CIP 106686 / LMG 19005 / NCIMB 14063 / MR-1)).